The following is a 483-amino-acid chain: MAEFTPITIAYGDGIGPEIMEAVLYILRKAEARIRLETIEVGEKLYKKHYTSGISEESWESIQRTGIILKAPITTPQGGGYKSLNVTIRKTLQLFANIRPSVSFHPFTMTLHPHLNLTIIRENEEDLYAGIEYRQTHNMYESIKLISHTGCEKIIRYAFEYAVKNNRKKVTCLSKDNIMKFSDGVFHKIFNEIAKEYPQINNEHYIIDIGTARLATKPEIFDVIVTSNLYGDIISDVAAEISGSVGLAGSANIGQHYAMFEAVHGSAPDIAGKDIANPSGLLNAAIMMLVHIGQGDIASLIENAWKKTIEDGVHTADIYNEQNSSKKVGTKEFAEEVTKRLGQIPTKLPKADYPLIAEKQESNIDYKIDTNEVKKLVGTDIFVNMNISSAHDIADKINKLDLGNIELKTISSKGLKLWPRDTRFETISDHWCCRFMNKDGTEIKHLDITRLLEALSKANIDFIKVENLFEFDGVAGYSLAQGE.

Thr74 contacts NADP(+). D-threo-isocitrate is bound by residues Ser83, Asn85, Arg89, Arg99, and Arg121. Residue Asp232 coordinates Mg(2+). Residues 264–270 (HGSAPDI) and Asn277 contribute to the NADP(+) site.

This sequence belongs to the isocitrate and isopropylmalate dehydrogenases family. Homodimer. Mg(2+) serves as cofactor. Requires Mn(2+) as cofactor.

The enzyme catalyses D-threo-isocitrate + NADP(+) = 2-oxoglutarate + CO2 + NADPH. Its function is as follows. Catalyzes the oxidative decarboxylation of isocitrate to 2-oxoglutarate and carbon dioxide with the concomitant reduction of NADP(+). The sequence is that of Isocitrate dehydrogenase [NADP] (icd) from Rickettsia felis (strain ATCC VR-1525 / URRWXCal2) (Rickettsia azadi).